The primary structure comprises 526 residues: Peptide chain release factor 3 (526 aa).

Positions 8–277 (GKRRTFAIIS…GLTEWAPAPQ (270 aa)) constitute a tr-type G domain. Residues 17-24 (SHPDAGKT), 85-89 (DTPGH), and 139-142 (NKMD) contribute to the GTP site.

Belongs to the TRAFAC class translation factor GTPase superfamily. Classic translation factor GTPase family. PrfC subfamily.

The protein resides in the cytoplasm. In terms of biological role, increases the formation of ribosomal termination complexes and stimulates activities of RF-1 and RF-2. It binds guanine nucleotides and has strong preference for UGA stop codons. It may interact directly with the ribosome. The stimulation of RF-1 and RF-2 is significantly reduced by GTP and GDP, but not by GMP. The sequence is that of Peptide chain release factor 3 from Aliivibrio salmonicida (strain LFI1238) (Vibrio salmonicida (strain LFI1238)).